A 245-amino-acid polypeptide reads, in one-letter code: 1-(5-phosphoribosyl)-5-[(5-phosphoribosylamino)methylideneamino] imidazole-4-carboxamide isomerase (245 aa).

The Proton acceptor role is filled by D8. Catalysis depends on D130, which acts as the Proton donor.

This sequence belongs to the HisA/HisF family.

The protein resides in the cytoplasm. It catalyses the reaction 1-(5-phospho-beta-D-ribosyl)-5-[(5-phospho-beta-D-ribosylamino)methylideneamino]imidazole-4-carboxamide = 5-[(5-phospho-1-deoxy-D-ribulos-1-ylimino)methylamino]-1-(5-phospho-beta-D-ribosyl)imidazole-4-carboxamide. Its pathway is amino-acid biosynthesis; L-histidine biosynthesis; L-histidine from 5-phospho-alpha-D-ribose 1-diphosphate: step 4/9. The protein is 1-(5-phosphoribosyl)-5-[(5-phosphoribosylamino)methylideneamino] imidazole-4-carboxamide isomerase of Teredinibacter turnerae (strain ATCC 39867 / T7901).